Here is a 900-residue protein sequence, read N- to C-terminus: Xylanolytic transcriptional activator xlnR (900 aa).

The segment covering 53–71 (SREGGNSENNSTFKPSSVR) has biased composition (polar residues). Positions 53-75 (SREGGNSENNSTFKPSSVRDSLA) are disordered. The segment at residues 98 to 124 (CDQCNQLRTKCDGQNPCAHCIEFGLTC) is a DNA-binding region (zn(2)-C6 fungal-type). 3 disordered regions span residues 137-169 (SKKD…QEPG), 520-559 (ELPP…NVTE), and 701-722 (EPPE…STVG). Over residues 531-542 (DGERENEGDNPS) the composition is skewed to basic and acidic residues. A compositionally biased stretch (polar residues) spans 543–557 (KRNQSLHGGNSNVNV). Low complexity predominate over residues 712–722 (SPSGRSSSTVG).

This sequence belongs to the xlnR/xlr1 family.

The protein resides in the nucleus. Functionally, transcriptional activator of the xylanolytic system. Involved in the regulation of extracellular cellulolytic and xylanolytic genes and in the regulation of the intracellular activities of D-xylose catabolic genes in the pentose catabolic pathway (PCP) in response to the presence of D-xylose. Binds to the DNA sequence 5'-GGNTAAA-3'. The polypeptide is Xylanolytic transcriptional activator xlnR (xlnR) (Emericella nidulans (strain FGSC A4 / ATCC 38163 / CBS 112.46 / NRRL 194 / M139) (Aspergillus nidulans)).